The sequence spans 100 residues: MARKSLIQRERKRQKLEQKFHSIRRSSKKEISKVSSLSGKWEIHGKLQSPPRNSAPIRLHRRCFLTGRPRGNYRDFGLSGHILRERFHACLLPGATRSSW.

Residues 1–54 (MARKSLIQRERKRQKLEQKFHSIRRSSKKEISKVSSLSGKWEIHGKLQSPPRNS) form a disordered region.

The protein belongs to the universal ribosomal protein uS14 family. Part of the 30S ribosomal subunit.

The protein resides in the plastid. It localises to the chloroplast. Functionally, binds 16S rRNA, required for the assembly of 30S particles. This is Small ribosomal subunit protein uS14c from Piper cenocladum (Ant piper).